The primary structure comprises 452 residues: uncharacterized protein (452 aa).

This is an uncharacterized protein from Acanthamoeba polyphaga (Amoeba).